Consider the following 107-residue polypeptide: MSRKESKAPRTRMTAGQTRVLMSFFKDNPFPSTTAREKLSKVLGVGPRTVQIWFQNQRQKARGQAKVSDREEGPRACTGSECLGKLCILACAAISRMEEEAAWNLGH.

A DNA-binding region (homeobox) is located at residues 6-65; the sequence is SKAPRTRMTAGQTRVLMSFFKDNPFPSTTAREKLSKVLGVGPRTVQIWFQNQRQKARGQA.

Its subcellular location is the nucleus. In Encephalitozoon cuniculi (strain GB-M1) (Microsporidian parasite), this protein is Homeobox protein HD-3 (HD-3).